The following is a 213-amino-acid chain: Na(+)-translocating NADH-quinone reductase subunit D (213 aa).

6 helical membrane-spanning segments follow: residues 22 to 42 (LIAI…TTAL), 43 to 63 (TMGF…SLLR), 77 to 97 (IIIS…FFTI), 101 to 121 (LSVF…AESM), 131 to 151 (FLDG…ISII), and 183 to 203 (LGLM…IWIV).

Belongs to the NqrDE/RnfAE family. As to quaternary structure, composed of six subunits; NqrA, NqrB, NqrC, NqrD, NqrE and NqrF.

It localises to the cell inner membrane. The catalysed reaction is a ubiquinone + n Na(+)(in) + NADH + H(+) = a ubiquinol + n Na(+)(out) + NAD(+). Its function is as follows. NQR complex catalyzes the reduction of ubiquinone-1 to ubiquinol by two successive reactions, coupled with the transport of Na(+) ions from the cytoplasm to the periplasm. NqrA to NqrE are probably involved in the second step, the conversion of ubisemiquinone to ubiquinol. In Chlamydia trachomatis serovar A (strain ATCC VR-571B / DSM 19440 / HAR-13), this protein is Na(+)-translocating NADH-quinone reductase subunit D.